Reading from the N-terminus, the 391-residue chain is AN1-type zinc finger and UBX domain-containing protein DDB_G0268260 (391 aa).

Residues 1–16 show a composition bias toward low complexity; that stretch reads MQQQSPPTAPQQQQQQ. Residues 1–20 form a disordered region; it reads MQQQSPPTAPQQQQQQQRER. 2 consecutive AN1-type zinc fingers follow at residues 26-74 and 118-166; these read DHIG…QREN and APKS…IINS. Zn(2+) is bound by residues C32, C37, C47, C50, C55, H58, H64, C66, C124, C129, C139, C142, C147, H150, H156, and C158. Positions 185–236 are enriched in low complexity; it reads NINNNINNNKNNNNNNNNNNNNNNNNNNNNNNNNNNNNNNNNNNNNNSNNNN. The interval 185-240 is disordered; the sequence is NINNNINNNKNNNNNNNNNNNNNNNNNNNNNNNNNNNNNNNNNNNNNSNNNNKLIY. The UBX domain occupies 278-356; it reads SSEEIGEIGI…GLLPVSTLYM (79 aa).

The chain is AN1-type zinc finger and UBX domain-containing protein DDB_G0268260 from Dictyostelium discoideum (Social amoeba).